We begin with the raw amino-acid sequence, 230 residues long: TorCAD operon transcriptional regulatory protein TorR (230 aa).

Residues 4–117 (HIVIVEDEPV…ELVVRVKNLL (114 aa)) enclose the Response regulatory domain. Asp53 carries the post-translational modification 4-aspartylphosphate. The segment at residues 132–227 (DNCYRFAGYC…QHGEGYFLAA (96 aa)) is a DNA-binding region (ompR/PhoB-type).

Interacts with TorI. TorI binds to the effector domain of TorR. This interaction, which does not interfere with TorR DNA binding activity, probably prevents the recruitment of RNA polymerase to the torCAD promoter. Phosphorylated and dephosphorylated by TorS.

The protein localises to the cytoplasm. Functionally, member of the two-component regulatory system TorS/TorR involved in the anaerobic utilization of trimethylamine-N-oxide (TMAO). Phosphorylated TorR activates the transcription of the torCAD operon by binding to four decameric boxes located in the torCAD promoter. Box1, 2 and 4 contain the DNA sequence 5'-CTGTTCATAT-3' and box3 contains the DNA sequence 5'-CCGTTCATCC-3'. Phosphorylated as well as unphosphorylated TorR negatively regulates its own expression by binding to box1 and 2. The sequence is that of TorCAD operon transcriptional regulatory protein TorR (torR) from Escherichia coli (strain K12).